The sequence spans 204 residues: Methylthioribulose-1-phosphate dehydratase (204 aa).

Zn(2+) contacts are provided by H94 and H96.

Belongs to the aldolase class II family. MtnB subfamily. Zn(2+) serves as cofactor.

It catalyses the reaction 5-(methylsulfanyl)-D-ribulose 1-phosphate = 5-methylsulfanyl-2,3-dioxopentyl phosphate + H2O. Its pathway is amino-acid biosynthesis; L-methionine biosynthesis via salvage pathway; L-methionine from S-methyl-5-thio-alpha-D-ribose 1-phosphate: step 2/6. Catalyzes the dehydration of methylthioribulose-1-phosphate (MTRu-1-P) into 2,3-diketo-5-methylthiopentyl-1-phosphate (DK-MTP-1-P). In Pseudomonas syringae pv. syringae (strain B728a), this protein is Methylthioribulose-1-phosphate dehydratase.